The following is a 403-amino-acid chain: Decapping and exoribonuclease protein 1 (403 aa).

Glu-223 contributes to the a divalent metal cation binding site. Substrate is bound at residue Glu-260. The a divalent metal cation site is built by Asp-262, Glu-273, and Ile-274. Residues Lys-275 and Gln-297 each coordinate substrate.

This sequence belongs to the DXO/Dom3Z family. Requires a divalent metal cation as cofactor.

It is found in the cytoplasm. The enzyme catalyses a 5'-end NAD(+)-phospho-ribonucleoside in mRNA + H2O = a 5'-end phospho-ribonucleoside in mRNA + NAD(+) + H(+). It catalyses the reaction a 5'-end (N(7)-methyl 5'-triphosphoguanosine)-ribonucleoside-ribonucleotide in mRNA + H2O = a (N(7)-methyl 5'-triphosphoguanosine)-nucleoside + a 5'-end phospho-ribonucleoside in mRNA + H(+). Functionally, decapping enzyme for NAD-capped RNAs: specifically hydrolyzes the nicotinamide adenine dinucleotide (NAD) cap from a subset of RNAs by removing the entire NAD moiety from the 5'-end of an NAD-capped RNA. The NAD-cap is present at the 5'-end of some RNAs and snoRNAs. In contrast to the canonical 5'-end N7 methylguanosine (m7G) cap, the NAD cap promotes mRNA decay. Also acts as a non-canonical decapping enzyme that removes the entire cap structure of m7G capped or incompletely capped RNAs and mediates their subsequent degradation. Has decapping and 5'-3' exonuclease activities. Has decapping activity toward incomplete 5'-end cap mRNAs such as unmethylated 5'-end-capped RNA to release GpppN and 5'-end monophosphate RNA. The 5'-end monophosphate RNA is then degraded by the 5'-3' exoribonuclease activity, enabling this enzyme to decap and degrade incompletely capped mRNAs. This chain is Decapping and exoribonuclease protein 1, found in Kluyveromyces lactis (strain ATCC 8585 / CBS 2359 / DSM 70799 / NBRC 1267 / NRRL Y-1140 / WM37) (Yeast).